Consider the following 756-residue polypeptide: Phosphate transporter PHO1 homolog 6 (756 aa).

Positions 1–303 constitute an SPX domain; it reads MKFGKDFSSE…SRDAAKSYMK (303 aa). Over 1 to 355 the chain is Cytoplasmic; that stretch reads MKFGKDFSSE…KPKRERHRLT (355 aa). The chain crosses the membrane as a helical span at residues 356–376; it reads FSTGFLGGCMFSLIVALVAIV. Topologically, residues 377 to 396 are extracellular; the sequence is RTRNILQDDGQKQYMNTMFP. Residues 397–417 traverse the membrane as a helical segment; that stretch reads LYSLFGFIMLHMTMYAANIYF. At 418 to 440 the chain is on the cytoplasmic side; that stretch reads WRQYRVNYSFIFGFKQGTELGYK. Residues 441 to 461 form a helical membrane-spanning segment; that stretch reads QVLFVGFSIGALALLCVLANL. Topologically, residues 462-477 are extracellular; sequence DMETDPKTKDYQALTE. Residues 478-498 form a helical membrane-spanning segment; the sequence is LLPLFLLIAMFVVLVVPFNIF. Topologically, residues 499-631 are cytoplasmic; sequence YRSSRFFFLT…DEKDRQIIWR (133 aa). An EXS domain is found at 562–756; sequence KDSQVFNTFL…SLPFNYEVDH (195 aa). Residues 632–652 form a helical membrane-spanning segment; that stretch reads LLGGITSAMAVVFCTYWDLVY. At 653 to 676 the chain is on the extracellular side; sequence DWGLLNRTSKNPWLRDNLLIPHKE. Residues 677–697 form a helical membrane-spanning segment; that stretch reads VYVLAMILNVVLRFAWMQTVL. Over 698-756 the chain is Cytoplasmic; the sequence is DFKFESIHTQTVVAVVASLEIIRRGIWNFFRLENEHLNNVGKYRAFKAVSLPFNYEVDH.

It belongs to the SYG1 (TC 2.A.94) family. In terms of tissue distribution, specifically expressed in anther connective tissue.

Its subcellular location is the cell membrane. In terms of biological role, may transport inorganic phosphate (Pi). The chain is Phosphate transporter PHO1 homolog 6 (PHO1-H6) from Arabidopsis thaliana (Mouse-ear cress).